A 495-amino-acid polypeptide reads, in one-letter code: Glutamyl-tRNA(Gln) amidotransferase subunit A (495 aa).

Residues Lys-75 and Ser-150 each act as charge relay system in the active site. The active-site Acyl-ester intermediate is Ser-174.

The protein belongs to the amidase family. GatA subfamily. In terms of assembly, heterotrimer of A, B and C subunits.

The catalysed reaction is L-glutamyl-tRNA(Gln) + L-glutamine + ATP + H2O = L-glutaminyl-tRNA(Gln) + L-glutamate + ADP + phosphate + H(+). Its function is as follows. Allows the formation of correctly charged Gln-tRNA(Gln) through the transamidation of misacylated Glu-tRNA(Gln) in organisms which lack glutaminyl-tRNA synthetase. The reaction takes place in the presence of glutamine and ATP through an activated gamma-phospho-Glu-tRNA(Gln). This is Glutamyl-tRNA(Gln) amidotransferase subunit A from Ralstonia nicotianae (strain ATCC BAA-1114 / GMI1000) (Ralstonia solanacearum).